We begin with the raw amino-acid sequence, 579 residues long: Tyrosine 3-monooxygenase (579 aa).

Acidic residues predominate over residues 105 to 114; it reads VEFESVEQEQ. A disordered region spans residues 105-132; that stretch reads VEFESVEQEQSESQSQEPEGNQQPTKND. Positions 409, 414, and 454 each coordinate Fe cation.

This sequence belongs to the biopterin-dependent aromatic amino acid hydroxylase family. Fe(2+) is required as a cofactor.

Its subcellular location is the cytoplasm. It is found in the perinuclear region. It localises to the cell projection. The protein resides in the axon. It carries out the reaction (6R)-L-erythro-5,6,7,8-tetrahydrobiopterin + L-tyrosine + O2 = (4aS,6R)-4a-hydroxy-L-erythro-5,6,7,8-tetrahydrobiopterin + L-dopa. It participates in catecholamine biosynthesis; dopamine biosynthesis; dopamine from L-tyrosine: step 1/2. With respect to regulation, phosphorylation leads to an increase in the catalytic activity. In terms of biological role, plays an important role in the physiology of adrenergic neurons. This Drosophila melanogaster (Fruit fly) protein is Tyrosine 3-monooxygenase (ple).